The sequence spans 392 residues: O-phospho-L-seryl-tRNA:Cys-tRNA synthase 1 (392 aa).

Residues 85–86 (AR), asparagine 190, and 213–215 (SGH) each bind pyridoxal 5'-phosphate. Lysine 216 carries the post-translational modification N6-(pyridoxal phosphate)lysine.

It belongs to the SepCysS family. As to quaternary structure, homodimer. Interacts with SepRS. Pyridoxal 5'-phosphate serves as cofactor.

The catalysed reaction is O-phospho-L-seryl-tRNA(Cys) + hydrogen sulfide + H(+) = L-cysteinyl-tRNA(Cys) + phosphate. Functionally, converts O-phospho-L-seryl-tRNA(Cys) (Sep-tRNA(Cys)) to L-cysteinyl-tRNA(Cys) (Cys-tRNA(Cys)). The polypeptide is O-phospho-L-seryl-tRNA:Cys-tRNA synthase 1 (Methanocorpusculum labreanum (strain ATCC 43576 / DSM 4855 / Z)).